The sequence spans 235 residues: 2-C-methyl-D-erythritol 4-phosphate cytidylyltransferase (235 aa).

Belongs to the IspD/TarI cytidylyltransferase family. IspD subfamily. As to quaternary structure, homodimer.

It catalyses the reaction 2-C-methyl-D-erythritol 4-phosphate + CTP + H(+) = 4-CDP-2-C-methyl-D-erythritol + diphosphate. The protein operates within isoprenoid biosynthesis; isopentenyl diphosphate biosynthesis via DXP pathway; isopentenyl diphosphate from 1-deoxy-D-xylulose 5-phosphate: step 2/6. Catalyzes the formation of 4-diphosphocytidyl-2-C-methyl-D-erythritol from CTP and 2-C-methyl-D-erythritol 4-phosphate (MEP). The chain is 2-C-methyl-D-erythritol 4-phosphate cytidylyltransferase from Serratia proteamaculans (strain 568).